Here is a 254-residue protein sequence, read N- to C-terminus: Alcohol dehydrogenase (254 aa).

Met-1 is modified (N-acetylmethionine). Residue 10 to 33 (FVAALGGIGLDTSRELVKRNLKNF) coordinates NAD(+). Residue Ser-138 coordinates substrate. Tyr-151 serves as the catalytic Proton acceptor.

The protein belongs to the short-chain dehydrogenases/reductases (SDR) family. In terms of assembly, homodimer.

The enzyme catalyses a primary alcohol + NAD(+) = an aldehyde + NADH + H(+). It carries out the reaction a secondary alcohol + NAD(+) = a ketone + NADH + H(+). This chain is Alcohol dehydrogenase (Adh), found in Drosophila lebanonensis (Fruit fly).